Reading from the N-terminus, the 153-residue chain is 1,4-dihydroxy-2-naphthoyl-CoA hydrolase (153 aa).

D21 is an active-site residue.

This sequence belongs to the 4-hydroxybenzoyl-CoA thioesterase family. DHNA-CoA hydrolase subfamily.

The catalysed reaction is 1,4-dihydroxy-2-naphthoyl-CoA + H2O = 1,4-dihydroxy-2-naphthoate + CoA + H(+). Its pathway is cofactor biosynthesis; phylloquinone biosynthesis. The protein operates within quinol/quinone metabolism; 1,4-dihydroxy-2-naphthoate biosynthesis; 1,4-dihydroxy-2-naphthoate from chorismate: step 7/7. In terms of biological role, catalyzes the hydrolysis of 1,4-dihydroxy-2-naphthoyl-CoA (DHNA-CoA) to 1,4-dihydroxy-2-naphthoate (DHNA), a reaction involved in phylloquinone (vitamin K1) biosynthesis. The polypeptide is 1,4-dihydroxy-2-naphthoyl-CoA hydrolase (Synechococcus sp. (strain WH7803)).